Consider the following 97-residue polypeptide: DNA-directed RNA polymerase subunit omega (97 aa).

This sequence belongs to the RNA polymerase subunit omega family. The RNAP catalytic core consists of 2 alpha, 1 beta, 1 beta' and 1 omega subunit. When a sigma factor is associated with the core the holoenzyme is formed, which can initiate transcription.

It catalyses the reaction RNA(n) + a ribonucleoside 5'-triphosphate = RNA(n+1) + diphosphate. Promotes RNA polymerase assembly. Latches the N- and C-terminal regions of the beta' subunit thereby facilitating its interaction with the beta and alpha subunits. The sequence is that of DNA-directed RNA polymerase subunit omega from Corynebacterium glutamicum (strain ATCC 13032 / DSM 20300 / JCM 1318 / BCRC 11384 / CCUG 27702 / LMG 3730 / NBRC 12168 / NCIMB 10025 / NRRL B-2784 / 534).